The chain runs to 535 residues: Lecithin-cholesterol acyltransferase-like 4 (535 aa).

N-acetylserine is present on Ser-2. The active-site Acyl-ester intermediate is Ser-182. Residues Asp-391 and His-416 each act as charge relay system in the active site. A compositionally biased stretch (polar residues) spans 488 to 505; it reads STVNSISVSQPGDDQNPQ. A disordered region spans residues 488–507; that stretch reads STVNSISVSQPGDDQNPQAE.

The protein belongs to the AB hydrolase superfamily. Lipase family.

In Arabidopsis thaliana (Mouse-ear cress), this protein is Lecithin-cholesterol acyltransferase-like 4 (LCAT4).